Here is a 513-residue protein sequence, read N- to C-terminus: ATP synthase subunit alpha (513 aa).

169 to 176 (GDRQVGKT) contacts ATP.

It belongs to the ATPase alpha/beta chains family. As to quaternary structure, F-type ATPases have 2 components, CF(1) - the catalytic core - and CF(0) - the membrane proton channel. CF(1) has five subunits: alpha(3), beta(3), gamma(1), delta(1), epsilon(1). CF(0) has three main subunits: a(1), b(2) and c(9-12). The alpha and beta chains form an alternating ring which encloses part of the gamma chain. CF(1) is attached to CF(0) by a central stalk formed by the gamma and epsilon chains, while a peripheral stalk is formed by the delta and b chains.

It is found in the cell inner membrane. It carries out the reaction ATP + H2O + 4 H(+)(in) = ADP + phosphate + 5 H(+)(out). Produces ATP from ADP in the presence of a proton gradient across the membrane. The alpha chain is a regulatory subunit. The sequence is that of ATP synthase subunit alpha from Aeromonas hydrophila subsp. hydrophila (strain ATCC 7966 / DSM 30187 / BCRC 13018 / CCUG 14551 / JCM 1027 / KCTC 2358 / NCIMB 9240 / NCTC 8049).